The chain runs to 258 residues: Short-chain dehydrogenase/reductase olcF (258 aa).

Val-12, Asp-58, and Arg-120 together coordinate NADP(+). Residue Ser-138 is the Proton donor of the active site. NADP(+)-binding residues include Tyr-152, Lys-156, and Val-185. The Proton acceptor role is filled by Tyr-152. Lys-156 functions as the Lowers pKa of active site Tyr in the catalytic mechanism.

Belongs to the short-chain dehydrogenases/reductases (SDR) family.

It participates in secondary metabolite biosynthesis; terpenoid biosynthesis. Its function is as follows. Short-chain dehydrogenase/reductase; part of the gene cluster that mediates the biosynthesis of 15-deoxyoxalicine B. The first step of the pathway is the synthesis of nicotinyl-CoA from nicotinic acid by the nicotinic acid-CoA ligase olcI. Nicotinyl-CoA is then a substrate of polyketide synthase olcA to produce 4-hydroxy-6-(3-pyridinyl)-2H-pyran-2-one (HPPO) which is further prenylated by the polyprenyl transferase olcH to yield geranylgeranyl-HPPO. Geranylgeranyl pyrophosphate is provided by the cluster-specific geranylgeranyl pyrophosphate synthase olcC. The FAD-dependent monooxygenase olcE catalyzes the epoxidation of geranylgeranyl-HPPO and the terpene cyclase olcD catalyzes the cyclization of the terpenoid component, resulting in the formation of the tricyclic terpene moiety seen in predecaturin E. The cytochrome P450 monooxygenase then catalyzes the allylic oxidation of predecaturin E, which is followed by spirocylization with concomitant loss of one molecule of water to form decaturin E. Decaturin E is the substrate of the cytochrome P450 monooxygenase olcJ which hydroxylates it at the C-29 position to form decaturin F. The short-chain dehydrogenase/reductase olcF may catalyze the oxidation of decaturin F to generate the 29-hydroxyl-27-one intermediate, and subsequent hemiacetal formation probably leads to the formation of decaturin C. The dioxygenase olcK may be a peroxisomal enzyme that catalyzes the hydroxylation of decaturin C into decaturin A once decaturin C is shuttled into the peroxisome by the MFS transporter olcL. Finally the cytochrome P450 monooxygenase olcB catalyzes the oxidative rearrangement to yield 15-deoxyoxalicine B. In the absence of olcJ, decaturin E may be shunted to a pathway in which it is oxidized to a ketone, possibly by olcF, to form decaturin D, which undergoes further allylic oxidation to yield decaturin G. Moreover, in the absence of oclK or oclL, oclB can convert decaturin C into 15-deoxyoxalicine A. The protein is Short-chain dehydrogenase/reductase olcF of Penicillium canescens.